The primary structure comprises 344 residues: Cyanuric acid amidohydrolase (344 aa).

Positions 1 to 91 are RU A; the sequence is MTVVDIVKRT…ASAFVGTDRP (91 aa). Residues Arg51 and 71 to 72 each bind substrate; that span reads SG. Positions 97–232 are RU B; that stretch reads ALVAAVGRTA…CHILVLGNSP (136 aa). Residue Lys146 is part of the active site. Substrate-binding positions include Arg178 and 215 to 216; that span reads SS. The Nucleophile role is filled by Ser215. The segment at 238–344 is RU C; sequence LRAVHGVMRD…PVTVVYRVAS (107 aa). Glu276 contacts Mg(2+). Substrate contacts are provided by residues Arg303 and 322-323; that span reads SG. Mg(2+) is bound by residues Ala325, Gln328, Gly329, Pro330, and Gly333.

It belongs to the cyclic amide hydrolase (CyAH) family. In terms of assembly, homotetramer.

The catalysed reaction is cyanurate + H2O = 1-carboxybiuret + H(+). It functions in the pathway xenobiotic degradation; atrazine degradation; biuret from cyanurate: step 1/1. Inhibited by barbituric acid. Responsible for the hydrolysis of cyanuric acid, an intermediate formed during catabolism of s-triazine based compounds in herbicides such as atrazine and polymers such as melamine. Catalyzes the hydrolytic opening of the s-triazine ring of cyanuric acid (2,4,6-trihydroxy-s-triazine) to yield carbon dioxide and carboxybiuret, which spontaneously decarboxylates to biuret. This chain is Cyanuric acid amidohydrolase, found in Pseudonocardia dioxanivorans (strain ATCC 55486 / DSM 44775 / JCM 13855 / CB1190).